The sequence spans 245 residues: Dehydrogenase/reductase SDR family member 6 (245 aa).

NAD(+) is bound by residues 16–18 (QGI), Asp-37, and Asp-58. Arg-144 serves as a coordination point for substrate. Residue Tyr-147 is the Proton acceptor of the active site. Residues Lys-151 and 180-184 (VDTPS) each bind NAD(+). Substrate contacts are provided by Arg-188 and Arg-205.

This sequence belongs to the short-chain dehydrogenases/reductases (SDR) family. In terms of assembly, homotetramer.

Its subcellular location is the cytoplasm. It carries out the reaction cis-4-hydroxy-L-proline + NAD(+) = 4-oxo-L-proline + NADH + H(+). The enzyme catalyses (R)-3-hydroxybutanoate + NAD(+) = acetoacetate + NADH + H(+). Its pathway is amino-acid metabolism. It functions in the pathway siderophore biosynthesis. NAD(H)-dependent dehydrogenase/reductase with a preference for cyclic substrates. Catalyzes stereoselective conversion of 4-oxo-L-proline to cis-4-hydroxy-L-proline, likely a detoxification mechanism for ketoprolines. Mediates the formation of 2,5-dihydroxybenzoate (2,5-DHBA), a siderophore that chelates free cytoplasmic iron and associates with LCN2, thereby regulating iron transport and homeostasis while protecting cells against free radical-induced oxidative stress. The iron-siderophore complex is imported into mitochondria, providing an iron source for mitochondrial metabolic processes in particular heme synthesis. May act as a 3-hydroxybutyrate dehydrogenase. This is Dehydrogenase/reductase SDR family member 6 (BDH2) from Bos taurus (Bovine).